The sequence spans 153 residues: Putative ubiquitin-conjugating enzyme E2 N-like (153 aa).

A UBC core domain is found at 3-150 (ELPHRIIKET…ARAWTRLYAM (148 aa)). Lys83 bears the N6-acetyllysine mark.

Belongs to the ubiquitin-conjugating enzyme family. Expressed in epididymis (at protein level).

In Homo sapiens (Human), this protein is Putative ubiquitin-conjugating enzyme E2 N-like (UBE2NL).